The following is a 151-amino-acid chain: Ribosome maturation factor RimP (151 aa).

The protein belongs to the RimP family.

The protein localises to the cytoplasm. Functionally, required for maturation of 30S ribosomal subunits. This Shewanella sp. (strain ANA-3) protein is Ribosome maturation factor RimP.